The chain runs to 319 residues: Molybdenum cofactor biosynthesis bifunctional protein (319 aa).

Positions 1-145 (MIDVGDKAVT…GKSGHWQRPA (145 aa)) are molybdenum cofactor biosynthesis protein C. Residues 61-63 (LCH) and 99-100 (ME) contribute to the substrate site. Asp114 is a catalytic residue. The molybdenum cofactor biosynthesis protein B stretch occupies residues 146-319 (IAPDVAPTGA…KGADHGTVKG (174 aa)).

The protein in the N-terminal section; belongs to the MoaC family. This sequence in the C-terminal section; belongs to the MoaB/Mog family.

It catalyses the reaction (8S)-3',8-cyclo-7,8-dihydroguanosine 5'-triphosphate = cyclic pyranopterin phosphate + diphosphate. Its pathway is cofactor biosynthesis; molybdopterin biosynthesis. Its function is as follows. Catalyzes the conversion of (8S)-3',8-cyclo-7,8-dihydroguanosine 5'-triphosphate to cyclic pyranopterin monophosphate (cPMP). This Synechococcus elongatus (strain ATCC 33912 / PCC 7942 / FACHB-805) (Anacystis nidulans R2) protein is Molybdenum cofactor biosynthesis bifunctional protein (moaCB).